Here is a 93-residue protein sequence, read N- to C-terminus: Small ribosomal subunit protein uS19 (93 aa).

The protein belongs to the universal ribosomal protein uS19 family.

Protein S19 forms a complex with S13 that binds strongly to the 16S ribosomal RNA. The sequence is that of Small ribosomal subunit protein uS19 from Streptococcus gordonii (strain Challis / ATCC 35105 / BCRC 15272 / CH1 / DL1 / V288).